Reading from the N-terminus, the 276-residue chain is 2-dehydro-3-deoxyphosphooctonate aldolase (276 aa).

This sequence belongs to the KdsA family.

The protein localises to the cytoplasm. The enzyme catalyses D-arabinose 5-phosphate + phosphoenolpyruvate + H2O = 3-deoxy-alpha-D-manno-2-octulosonate-8-phosphate + phosphate. Its pathway is carbohydrate biosynthesis; 3-deoxy-D-manno-octulosonate biosynthesis; 3-deoxy-D-manno-octulosonate from D-ribulose 5-phosphate: step 2/3. It participates in bacterial outer membrane biogenesis; lipopolysaccharide biosynthesis. The sequence is that of 2-dehydro-3-deoxyphosphooctonate aldolase from Xylella fastidiosa (strain 9a5c).